Consider the following 563-residue polypeptide: Putative inactive polypeptide N-acetylgalactosaminyltransferase 12 (563 aa).

Over 1–6 (MEVFAS) the chain is Cytoplasmic. Residues 7-29 (VLNCCFKYIVLPVWIFIVLLLLH) form a helical; Signal-anchor for type II membrane protein membrane-spanning segment. Residues 30–563 (RDLSSWDGLM…SVMQSANILV (534 aa)) lie on the Lumenal side of the membrane. An N-linked (GlcNAc...) asparagine glycan is attached at Asn50. An intrachain disulfide couples Cys97 to Cys334. Residues 109–225 (MKPASIIMIF…NGWLSPLLDT (117 aa)) form a catalytic subdomain A region. The interval 280 to 342 (PYEVAAVRTS…PCSRVGHLQP (63 aa)) is catalytic subdomain B. 2 N-linked (GlcNAc...) asparagine glycosylation sites follow: Asn389 and Asn428. In terms of domain architecture, Ricin B-type lectin spans 433–549 (ASGHVKTLEF…ANGKQRWILD (117 aa)). Cys446 and Cys461 form a disulfide bridge. Asn464 and Asn469 each carry an N-linked (GlcNAc...) asparagine glycan. Intrachain disulfides connect Cys485-Cys499 and Cys523-Cys537. N-linked (GlcNAc...) asparagine glycosylation is present at Asn552.

The protein belongs to the glycosyltransferase 2 family. GalNAc-T subfamily.

The protein resides in the golgi apparatus membrane. Its function is as follows. Probable inactive glycosyltransferase. The chain is Putative inactive polypeptide N-acetylgalactosaminyltransferase 12 (pgant12) from Drosophila melanogaster (Fruit fly).